Reading from the N-terminus, the 591-residue chain is Paxillin (591 aa).

Met1 carries the N-acetylmethionine modification. Asp2 carries the post-translational modification N-acetylserine. The short motif at 3–15 (DLDALLADLESTT) is the LD motif 1 element. Residues 17 to 138 (HISKRPVFLS…PSPTVMSTSL (122 aa)) form a disordered region. Tyr31 is modified (phosphotyrosine; by PTK6). Residues 45–54 (VPPPVPPPPS) show a composition bias toward pro residues. Residues 69 to 106 (WQPSSSRFIHQQPQSSSPVYGSSAKTSSVSNPQDSVGS) are compositionally biased toward polar residues. Residues Ser83 and Ser85 each carry the phosphoserine modification. The residue at position 88 (Tyr88) is a Phosphotyrosine. Ser106 bears the Phosphoserine mark. Position 118 is a phosphotyrosine; by PTK6 (Tyr118). Residues Ser119, Ser126, and Ser130 each carry the phosphoserine modification. Positions 121–137 (PNKQKSAEPSPTVMSTS) are enriched in polar residues. Thr132 carries the post-translational modification Phosphothreonine. Residues Ser137, Ser140, and Ser143 each carry the phosphoserine modification. The LD motif 2 motif lies at 144-156 (ELDRLLLELNAVQ). Residues 159 to 260 (PPGFPADEAN…TQQQTRISAS (102 aa)) form a disordered region. Residue Tyr181 is modified to Phosphotyrosine. The short motif at 216–228 (SVESLLDELESSV) is the LD motif 3 element. Ser230 carries the phosphoserine modification. Residues 236–260 (TVNQGEMSSPQRVTSTQQQTRISAS) show a composition bias toward polar residues. Ser244 carries the post-translational modification Phosphoserine; by CDK5. Phosphoserine; by SLK is present on Ser250. Ser258, Ser261, Ser272, Ser303, Ser322, Ser332, and Ser340 each carry phosphoserine. A required for binding to PARVA and ILK region spans residues 262–315 (ATRELDELMASLSDFKIQGLEQRADGERCWAAGWPRDGGRSSPGGQDEGGFMAQ). The short motif at 265-276 (ELDELMASLSDF) is the LD motif 4 element. A disordered region spans residues 291–335 (WAAGWPRDGGRSSPGGQDEGGFMAQGKTGSSSPPGGPPKPGSQLD). Positions 333 to 345 (QLDSMLGSLQSDL) match the LD motif 5 motif. LIM zinc-binding domains follow at residues 356–415 (GVCG…LFSP), 416–473 (RCYY…DMFA), 474–533 (PKCG…RRGS), and 534–591 (LCSG…KLFC). Ser533 carries the post-translational modification Phosphoserine.

Belongs to the paxillin family. Interacts in vitro with VCL/vinculin as well as to the SH3 domain of SRC and, when tyrosine phosphorylated, to the SH2 domain of CRK. Interacts with GIT1. Interacts with NUDT16L1/SDOS. Interacts with PTK2/FAK1. Interacts with PTK2B/PYK2. Interacts with ASAP2. Interacts with unphosphorylated ITGA4. Interacts with RNF5. Interacts with PDCD10. Interacts with NEK3, the interaction is prolactin-dependent. Interacts with PTK6. Interacts with TGFB1I1. Interacts with SORBS1. Interacts with PARVB. Interacts (via LD motif 4) with PARVA/PARVIN. Interacts (via LD motif 4) with ILK. Interacts (via cytoplasmic domain) with CEACAM1; the interaction is phosphotyrosyl-dependent. Interacts with LIMA1; this complex stabilizes actin dynamics. Interacts with CD36 (via C-terminus). Interacts with TRIM15. Interacts with PAK4; PAK4 acts as a scaffold to suppport PAXI phosphorylation at Ser-272. As to quaternary structure, interacts strongly with PTK2/FAK1 and weakly with VCL/vinculin. In terms of assembly, interacts strongly with VCL/vinculin but only weakly with PTK2/FAK1. Phosphorylated by MAPK1/ERK2. Phosphorylated on tyrosine residues during integrin-mediated cell adhesion, embryonic development, fibroblast transformation and following stimulation of cells by mitogens. Phosphorylation at Ser-244 by CDK5 reduces its interaction with PTK2/FAK1 in matrix-cell focal adhesions (MCFA) during oligodendrocytes (OLs) differentiation. Phosphorylation at Tyr-31 and Tyr-118 by PTK6 promote the activation of RAC1 via CRK/CrKII, thereby promoting migration and invasion. Phosphorylation at Ser-250 by SLK is required for PXN redistribution and cell motility. Phosphorylation at Ser-272 promotes focal adhesion disassembly during cell migration.

Its subcellular location is the cytoplasm. The protein localises to the cytoskeleton. It is found in the cell junction. It localises to the focal adhesion. The protein resides in the cell cortex. Functionally, cytoskeletal protein involved in actin-membrane attachment at sites of cell adhesion to the extracellular matrix (focal adhesion). Recruits other proteins such as TRIM15 to focal adhesion. In Homo sapiens (Human), this protein is Paxillin.